The following is a 528-amino-acid chain: Protein spinster homolog 1 (528 aa).

Residues Met1–Glu38 are disordered. Ala2 carries the N-acetylalanine modification. A run of 12 helical transmembrane segments spans residues Leu60–Ala80, Gly98–Leu118, Tyr126–Pro146, Val160–Val180, Met187–Ser207, Trp218–Val238, Leu278–Leu298, Leu323–Ile343, Leu357–Ala377, Ile381–Ile401, Phe421–Ile441, and Met465–Ile485. Phosphoserine is present on Ser518.

This sequence belongs to the major facilitator superfamily. Spinster (TC 2.A.1.49) family. Interacts with BCL2 and BCL2L1. Expressed in liver (at mRNA and protein levels).

It is found in the lysosome membrane. It carries out the reaction a 1-acyl-sn-glycero-3-phosphocholine(out) + H(+)(out) = a 1-acyl-sn-glycero-3-phosphocholine(in) + H(+)(in). It catalyses the reaction 1-hexadecanoyl-sn-glycero-3-phosphocholine(out) + H(+)(out) = 1-hexadecanoyl-sn-glycero-3-phosphocholine(in) + H(+)(in). The enzyme catalyses 1-(9Z-octadecenoyl)-sn-glycero-3-phosphocholine(out) + H(+)(out) = 1-(9Z-octadecenoyl)-sn-glycero-3-phosphocholine(in) + H(+)(in). The catalysed reaction is 1-(5Z,8Z,11Z,14Z-eicosatetraenoyl)-sn-glycero-3-phosphocholine(out) + H(+)(out) = 1-(5Z,8Z,11Z,14Z-eicosatetraenoyl)-sn-glycero-3-phosphocholine(in) + H(+)(in). It carries out the reaction 1-(4Z,7Z,10Z,13Z,16Z,19Z-docosahexaenoyl)-sn-glycero-3-phosphocholine(out) + H(+)(out) = 1-(4Z,7Z,10Z,13Z,16Z,19Z-docosahexaenoyl)-sn-glycero-3-phosphocholine(in) + H(+)(in). It catalyses the reaction a 1-acyl-sn-glycero-3-phosphoethanolamine(out) + H(+)(out) = a 1-acyl-sn-glycero-3-phosphoethanolamine(in) + H(+)(in). The enzyme catalyses 1-(9Z-octadecenoyl)-sn-glycero-3-phosphoethanolamine(out) + H(+)(out) = 1-(9Z-octadecenoyl)-sn-glycero-3-phosphoethanolamine(in) + H(+)(in). The catalysed reaction is 1-acyl-sn-glycero-3-phospho-(1'-sn-glycerol)(out) + H(+)(out) = 1-acyl-sn-glycero-3-phospho-(1'-sn-glycerol)(in) + H(+)(in). It carries out the reaction 1-(9Z-octadecenoyl)-sn-glycero-3-phospho-(1'-sn-glycerol)(out) + H(+)(out) = 1-(9Z-octadecenoyl)-sn-glycero-3-phospho-(1'-sn-glycerol)(in) + H(+)(in). It catalyses the reaction a 1-O-(1Z-alkenyl)-sn-glycero-3-phosphocholine(out) + H(+)(out) = a 1-O-(1Z-alkenyl)-sn-glycero-3-phosphocholine(in) + H(+)(in). The enzyme catalyses 1-(1Z-hexadecenyl)-sn-glycero-3-phosphocholine(out) + H(+)(out) = 1-(1Z-hexadecenyl)-sn-glycero-3-phosphocholine(in) + H(+)(in). The catalysed reaction is a 1-O-(1Z-alkenyl)-sn-glycero-3-phosphoethanolamine(out) + H(+)(out) = a 1-O-(1Z-alkenyl)-sn-glycero-3-phosphoethanolamine(in) + H(+)(in). It carries out the reaction 1-O-(1Z-hexadecenyl)-sn-glycero-3-phosphoethanolamine(out) + H(+)(out) = 1-O-(1Z-hexadecenyl)-sn-glycero-3-phosphoethanolamine(in) + H(+)(in). In terms of biological role, plays a critical role in the phospholipid salvage pathway from lysosomes to the cytosol. Mediates the rate-limiting, proton-dependent, lysosomal efflux of lysophospholipids, which can then be reacylated by acyltransferases in the endoplasmic reticulum to form phospholipids. Selective for zwitterionic headgroups such as lysophosphatidylcholine (LPC) and lysophosphatidylethanolamine (LPE), can also transport lysophosphatidylglycerol (LPG), but not other anionic lysophospholipids, sphingosine, nor sphingomyelin. Transports lysophospholipids with saturated, monounsaturated, and polyunsaturated fatty acids, such as 1-hexadecanoyl-sn-glycero-3-phosphocholine, 1-(9Z-octadecenoyl)-sn-glycero-3-phosphocholine and 1-(4Z,7Z,10Z,13Z,16Z,19Z-docosahexaenoyl)-sn-glycero-3-phosphocholine, respectively. Can also transport lysoplasmalogen (LPC with a fatty alcohol) such as 1-(1Z-hexadecenyl)-sn-glycero-3-phosphocholine. Essential player in lysosomal homeostasis. Crucial for cell survival under conditions of nutrient limitation. May be involved in necrotic or autophagic cell death. In Mus musculus (Mouse), this protein is Protein spinster homolog 1 (Spns1).